A 315-amino-acid polypeptide reads, in one-letter code: MSFASETKKELTQIEADNHCMKAEVSALIRMNGSLSFANKQLSLDVQTENAAIARRLYTIMKKLYPYNVELLVRKKMRLKKNNVYICRVREGARELLIDLEIISDDFQFNHTISRKLIKKNGQKRAYLRGAFLAGGSVNNPETSAYHLEIYSLYKEHGEALMDLMNEFELNAKTIERKKGFVTYLKEAEKISDFLNIVGAHQAMMKFEDVRILRDMRNSVNRIVNCETANLNKTIGAALRQVENIRFIENSIGLDQLPEKLREIARLRVEYQDVTLKELGEMVSSGTVSKSGVNHRLRKIDEIADALRRGEKIGG.

Positions 275–309 (TLKELGEMVSSGTVSKSGVNHRLRKIDEIADALRR) form a DNA-binding region, H-T-H motif.

Belongs to the WhiA family.

Its function is as follows. Involved in cell division and chromosome segregation. The chain is Probable cell division protein WhiA from Lysinibacillus sphaericus (strain C3-41).